The following is a 305-amino-acid chain: Olfactory receptor 4F17 (305 aa).

At 1–18 (MVTEFIFLGLSDSQGLQT) the chain is on the extracellular side. The helical transmembrane segment at 19–42 (FLFMLFFVFYGGIVFGNLLIVITV) threads the bilayer. At 43 to 50 (VSDSHLHS) the chain is on the cytoplasmic side. Residues 51–72 (PMYFLLANLSLIDLSLSSVTAP) traverse the membrane as a helical segment. The Extracellular portion of the chain corresponds to 73-93 (KMITDFFSQRKVISFKGCLVQ). Cysteine 90 and cysteine 182 are disulfide-bonded. The helical transmembrane segment at 94 to 113 (IFLLHFFGGSEMVILIAMGF) threads the bilayer. The Cytoplasmic portion of the chain corresponds to 114–132 (DRYIAICKPLHYTTIMCGN). A helical membrane pass occupies residues 133–151 (ACVGIMAVAWGIGFLHSVS). Topologically, residues 152 to 188 (QLAFAVHLPFCGPNEVDSFYCDLPRVIKLACTDTYRL) are extracellular. A helical membrane pass occupies residues 189-212 (DIMVIANSGVLTVCSFVLLIISYT). Residues 213–228 (IILMTIQHRPLDKSSK) are Cytoplasmic-facing. A helical membrane pass occupies residues 229 to 251 (ALSTLTAHITVVLLFFGPCVFIY). The Extracellular segment spans residues 252–262 (AWPFPIKSLDK). Residues 263 to 282 (FLAVFYSVITPLLNPIIYTL) traverse the membrane as a helical segment. At 283-305 (RNKDMKTAIRQLRKWDAHSSVKF) the chain is on the cytoplasmic side.

Belongs to the G-protein coupled receptor 1 family.

The protein resides in the cell membrane. Functionally, odorant receptor. The sequence is that of Olfactory receptor 4F17 (OR4F17) from Homo sapiens (Human).